Consider the following 304-residue polypeptide: Ribosome-inactivating protein 9 (304 aa).

Residue E208 is part of the active site.

It belongs to the ribosome-inactivating protein family. Type 1 RIP subfamily. In terms of assembly, monomer. In terms of tissue distribution, accumulates to high levels in seeds.

The protein localises to the cytoplasm. It catalyses the reaction Endohydrolysis of the N-glycosidic bond at one specific adenosine on the 28S rRNA.. Possesses features of some constitutive defense agent. The coordinate Opaque-2-controlled synthesis of this protein and the major seed storage proteins (zeins) may provide the germinating seedling with both nutritional benefits and protection against pathogen invasion of the surrounding endosperm. This Zea mays (Maize) protein is Ribosome-inactivating protein 9 (CRIP9).